Here is a 384-residue protein sequence, read N- to C-terminus: Putative F-box/kelch-repeat protein At3g27910 (384 aa).

One can recognise an F-box domain in the interval 27 to 79 (SPTSLPLPDEIIVNCFAYIPRCDYPSLSLVSKTFNRLITSIELNIVRSLFQRT). Kelch repeat units follow at residues 138 to 184 (KIYV…IVDG), 185 to 235 (KIYV…VMNK), 237 to 274 (IYIM…VIDN), and 275 to 323 (MLYT…MANH).

The polypeptide is Putative F-box/kelch-repeat protein At3g27910 (Arabidopsis thaliana (Mouse-ear cress)).